Here is a 164-residue protein sequence, read N- to C-terminus: UBA-like domain-containing protein 2 (164 aa).

At serine 2 the chain carries N-acetylserine. Residues 128–164 are disordered; the sequence is SSPTTFHHLHRPQPTWPPGAQQGGAQQKAMAAMDGQR. Residues 146-164 are compositionally biased toward low complexity; it reads GAQQGGAQQKAMAAMDGQR.

The protein belongs to the UBALD family.

In Homo sapiens (Human), this protein is UBA-like domain-containing protein 2 (UBALD2).